Consider the following 383-residue polypeptide: Cytochrome b (383 aa).

4 consecutive transmembrane segments (helical) span residues 31-51, 75-97, 112-132, and 178-198; these read FGSL…FLAM, WLMR…VHIF, LWCS…MGYV, and FFSL…IHLI. Heme b contacts are provided by His-81 and His-95. Positions 182 and 196 each coordinate heme b. His-201 contributes to the a ubiquinone binding site. The next 4 helical transmembrane spans lie at 224–244, 288–308, 320–340, and 347–367; these read FYTK…IFIF, IGGV…PFTN, IFKV…WVGQ, and YTEI…IIIP.

This sequence belongs to the cytochrome b family. In terms of assembly, fungal cytochrome b-c1 complex contains 10 subunits; 3 respiratory subunits, 2 core proteins and 5 low-molecular weight proteins. Cytochrome b-c1 complex is a homodimer. The cofactor is heme b.

It localises to the mitochondrion inner membrane. In terms of biological role, component of the ubiquinol-cytochrome c reductase complex (complex III or cytochrome b-c1 complex) that is part of the mitochondrial respiratory chain. The b-c1 complex mediates electron transfer from ubiquinol to cytochrome c. Contributes to the generation of a proton gradient across the mitochondrial membrane that is then used for ATP synthesis. This is Cytochrome b (cob) from Phytophthora megasperma (Potato pink rot fungus).